The chain runs to 420 residues: Histidine--tRNA ligase (420 aa).

Belongs to the class-II aminoacyl-tRNA synthetase family. As to quaternary structure, homodimer.

The protein localises to the cytoplasm. It carries out the reaction tRNA(His) + L-histidine + ATP = L-histidyl-tRNA(His) + AMP + diphosphate + H(+). In Thermodesulfovibrio yellowstonii (strain ATCC 51303 / DSM 11347 / YP87), this protein is Histidine--tRNA ligase.